Consider the following 613-residue polypeptide: Secretogranin-2 (613 aa).

The N-terminal stretch at 1–27 is a signal peptide; sequence MAEAKTHWLGAVLSLIPLIFLLSEAEA. A propeptide spanning residues 28–30 is cleaved from the precursor; the sequence is ASF. Disordered stretches follow at residues 67 to 105 and 119 to 146; these read QQAH…DSLS and QAEN…PMDM. A compositionally biased stretch (basic and acidic residues) spans 92-105; sequence ENGDLPESSRDSLS. Position 150 is a sulfotyrosine (Tyr150). Phosphoserine is present on residues Ser173, Ser267, Ser428, Ser528, Ser551, and Ser552. Residues 257 to 283 are compositionally biased toward basic and acidic residues; sequence ESQTQEEVRDSKENADKTEQINDEMKR. The interval 257–287 is disordered; the sequence is ESQTQEEVRDSKENADKTEQINDEMKRSGQL. The span at 546–557 shows a compositional bias: basic and acidic residues; the sequence is HLSQHSSQETDK. A disordered region spans residues 546–580; sequence HLSQHSSQETDKLASVSKRLPVGTPKSDDTPNRPY.

Belongs to the chromogranin/secretogranin protein family. Interacts with Secretogranin III/SCG3. As to expression, highest levels detected in anterior pituitary followed by adrenal medulla and posterior pituitary (at protein level). In the brain, high levels are found in the hypothalamus, comparable to those present in posterior pituitary with two- to six-fold lower levels present in the other brain regions investigated including caudate nucleus, hippocampus, thalamus and brainstem (at protein level).

It is found in the secreted. Functionally, neuroendocrine protein of the granin family that regulates the biogenesis of secretory granules. This is Secretogranin-2 (SCG2) from Bos taurus (Bovine).